We begin with the raw amino-acid sequence, 314 residues long: Acetaldehyde dehydrogenase 1 (314 aa).

11-14 contributes to the NAD(+) binding site; the sequence is SGNI. Residue Cys129 is the Acyl-thioester intermediate of the active site. Residues 160–168 and Asn292 contribute to the NAD(+) site; that span reads SAGPGTRAN.

This sequence belongs to the acetaldehyde dehydrogenase family.

It carries out the reaction acetaldehyde + NAD(+) + CoA = acetyl-CoA + NADH + H(+). This Nocardioides sp. (strain ATCC BAA-499 / JS614) protein is Acetaldehyde dehydrogenase 1.